The primary structure comprises 137 residues: Large ribosomal subunit protein uL16 (137 aa).

Residues 1-17 (MLSPKRVKFRKRQRGRL) are compositionally biased toward basic residues. The tract at residues 1-24 (MLSPKRVKFRKRQRGRLKGTDERG) is disordered.

Belongs to the universal ribosomal protein uL16 family. As to quaternary structure, part of the 50S ribosomal subunit.

Functionally, binds 23S rRNA and is also seen to make contacts with the A and possibly P site tRNAs. The protein is Large ribosomal subunit protein uL16 of Leptospira borgpetersenii serovar Hardjo-bovis (strain JB197).